Consider the following 271-residue polypeptide: NADPH-dependent 7-cyano-7-deazaguanine reductase (271 aa).

Residue 81–83 participates in substrate binding; the sequence is IES. 83–84 provides a ligand contact to NADPH; sequence SK. The active-site Thioimide intermediate is the C177. The active-site Proton donor is D184. Position 216 to 217 (216 to 217) interacts with substrate; that stretch reads HE. 245–246 lines the NADPH pocket; it reads RG.

Belongs to the GTP cyclohydrolase I family. QueF type 2 subfamily. Homodimer.

Its subcellular location is the cytoplasm. The catalysed reaction is 7-aminomethyl-7-carbaguanine + 2 NADP(+) = 7-cyano-7-deazaguanine + 2 NADPH + 3 H(+). Its pathway is tRNA modification; tRNA-queuosine biosynthesis. Functionally, catalyzes the NADPH-dependent reduction of 7-cyano-7-deazaguanine (preQ0) to 7-aminomethyl-7-deazaguanine (preQ1). The chain is NADPH-dependent 7-cyano-7-deazaguanine reductase from Xanthomonas campestris pv. campestris (strain 8004).